Reading from the N-terminus, the 295-residue chain is Protoheme IX farnesyltransferase (295 aa).

9 consecutive transmembrane segments (helical) span residues 27 to 47, 48 to 68, 93 to 115, 119 to 136, 147 to 167, 175 to 195, 219 to 239, 247 to 267, and 275 to 295; these read IMYLVVLTGITGMIIAPGNIH, PFIGIISTLCIALGSGAAGAI, IARSTAIELGLVLSVISVTVMMI, YLSGILLAISIGFYSLVY, NIVIGGIAGALPPIIGWTSVT, LILFLIIFVWTPPHFWALSLL, IYILVYSIILFIITLLPGIFL, TCAIPLGMTFVFHAFKVFVSI, and MFTYSIAYLFILFICIIISSF.

It belongs to the UbiA prenyltransferase family. Protoheme IX farnesyltransferase subfamily.

It localises to the cell inner membrane. The enzyme catalyses heme b + (2E,6E)-farnesyl diphosphate + H2O = Fe(II)-heme o + diphosphate. The protein operates within porphyrin-containing compound metabolism; heme O biosynthesis; heme O from protoheme: step 1/1. Its function is as follows. Converts heme B (protoheme IX) to heme O by substitution of the vinyl group on carbon 2 of heme B porphyrin ring with a hydroxyethyl farnesyl side group. The sequence is that of Protoheme IX farnesyltransferase from Ehrlichia chaffeensis (strain ATCC CRL-10679 / Arkansas).